The chain runs to 208 residues: Imidazoleglycerol-phosphate dehydratase (208 aa).

The disordered stretch occupies residues 1–22 (MTRRAAVKAPRAGAAARRGSVA). A compositionally biased stretch (low complexity) spans 7-19 (VKAPRAGAAARRG).

This sequence belongs to the imidazoleglycerol-phosphate dehydratase family.

It is found in the cytoplasm. It catalyses the reaction D-erythro-1-(imidazol-4-yl)glycerol 3-phosphate = 3-(imidazol-4-yl)-2-oxopropyl phosphate + H2O. Its pathway is amino-acid biosynthesis; L-histidine biosynthesis; L-histidine from 5-phospho-alpha-D-ribose 1-diphosphate: step 6/9. The chain is Imidazoleglycerol-phosphate dehydratase from Anaeromyxobacter dehalogenans (strain 2CP-C).